A 96-amino-acid polypeptide reads, in one-letter code: DNA-directed RNA polymerase subunit Rpo11 (96 aa).

It belongs to the archaeal Rpo11/eukaryotic RPB11/RPC19 RNA polymerase subunit family. As to quaternary structure, part of the RNA polymerase complex.

The protein resides in the cytoplasm. It catalyses the reaction RNA(n) + a ribonucleoside 5'-triphosphate = RNA(n+1) + diphosphate. DNA-dependent RNA polymerase (RNAP) catalyzes the transcription of DNA into RNA using the four ribonucleoside triphosphates as substrates. This Haloquadratum walsbyi (strain DSM 16790 / HBSQ001) protein is DNA-directed RNA polymerase subunit Rpo11.